A 494-amino-acid chain; its full sequence is V-type proton ATPase subunit B (494 aa).

Arginine 384 lines the ATP pocket.

Belongs to the ATPase alpha/beta chains family. In terms of assembly, V-ATPase is a heteromultimeric enzyme made up of two complexes: the ATP-hydrolytic V1 complex and the proton translocation V0 complex. The V1 complex consists of three catalytic AB heterodimers that form a heterohexamer, three peripheral stalks each consisting of EG heterodimers, one central rotor including subunits D and F, and the regulatory subunits C and H. The proton translocation complex V0 consists of the proton transport subunit a, a ring of proteolipid subunits c9c'', rotary subunit d, subunits e and f, and the accessory subunits VhaAC45 and ATP6AP2.

Non-catalytic subunit of the V1 complex of vacuolar(H+)-ATPase (V-ATPase), a multisubunit enzyme composed of a peripheral complex (V1) that hydrolyzes ATP and a membrane integral complex (V0) that translocates protons. V-ATPase is responsible for acidifying and maintaining the pH of intracellular compartments and in some cell types, is targeted to the plasma membrane, where it is responsible for acidifying the extracellular environment. Essential for the proper assembly and activity of V-ATPase. This is V-type proton ATPase subunit B (VHA55) from Manduca sexta (Tobacco hawkmoth).